The primary structure comprises 299 residues: Probable endonuclease 4 (299 aa).

Residues histidine 68, histidine 110, glutamate 145, aspartate 179, histidine 182, histidine 214, aspartate 227, histidine 229, and glutamate 259 each coordinate Zn(2+).

It belongs to the AP endonuclease 2 family. Zn(2+) serves as cofactor.

It carries out the reaction Endonucleolytic cleavage to 5'-phosphooligonucleotide end-products.. Functionally, endonuclease IV plays a role in DNA repair. It cleaves phosphodiester bonds at apurinic or apyrimidinic (AP) sites, generating a 3'-hydroxyl group and a 5'-terminal sugar phosphate. The sequence is that of Probable endonuclease 4 from Exiguobacterium sibiricum (strain DSM 17290 / CCUG 55495 / CIP 109462 / JCM 13490 / 255-15).